The following is a 728-amino-acid chain: E3 ubiquitin-protein ligase TRIM36 (728 aa).

The RING-type; degenerate zinc-finger motif lies at 33–84 (CPACKELFTHPLILPCQHSICHKCVKELLLTLDDSFNDVGSDNSNQSSPRLR). 2 B box-type zinc fingers span residues 154–192 (AIMCDLCKPPPQESTKSCMDCSASYCNECFKIHHPWGTI) and 207–249 (PKIL…VTTM). Residues Cys-212, His-215, Cys-235, and His-241 each coordinate Zn(2+). Residues 271-345 (ESQVKSQISE…MEEYQGLLEN (75 aa)) are a coiled coil. The 58-residue stretch at 356-413 (LKETDQSCFVQTAKQLHLRIQKATESLKSFRPAAQTSFEDYVVNTSKQTELLGELSFF) folds into the COS domain. One can recognise a Fibronectin type-III domain in the interval 419–510 (VPEINEEQSK…RELILHTPPA (92 aa)). The region spanning 508-720 (PPAPVFSFLF…IQLEEPITAK (213 aa)) is the B30.2/SPRY domain.

This sequence belongs to the TRIM/RBCC family. As to quaternary structure, interacts with CENPH. As to expression, highly expressed in testis, prostate and brain. Weakly expressed in kidney, lung and heart. Expressed in fetal tissues.

It is found in the cytoplasm. Its subcellular location is the cytoplasmic vesicle. The protein resides in the secretory vesicle. It localises to the acrosome. The protein localises to the cytoskeleton. It carries out the reaction S-ubiquitinyl-[E2 ubiquitin-conjugating enzyme]-L-cysteine + [acceptor protein]-L-lysine = [E2 ubiquitin-conjugating enzyme]-L-cysteine + N(6)-ubiquitinyl-[acceptor protein]-L-lysine.. In terms of biological role, E3 ubiquitin-protein ligase which mediates ubiquitination and subsequent proteasomal degradation of target proteins. Involved in chromosome segregation and cell cycle regulation. May play a role in the acrosome reaction and fertilization. The polypeptide is E3 ubiquitin-protein ligase TRIM36 (TRIM36) (Homo sapiens (Human)).